A 48-amino-acid polypeptide reads, in one-letter code: ATP synthase protein 8 (48 aa).

The helical transmembrane segment at Gln-12 to Leu-32 threads the bilayer.

Belongs to the ATPase protein 8 family. As to quaternary structure, F-type ATPases have 2 components, CF(1) - the catalytic core - and CF(0) - the membrane proton channel.

Its subcellular location is the mitochondrion membrane. Functionally, mitochondrial membrane ATP synthase (F(1)F(0) ATP synthase or Complex V) produces ATP from ADP in the presence of a proton gradient across the membrane which is generated by electron transport complexes of the respiratory chain. F-type ATPases consist of two structural domains, F(1) - containing the extramembraneous catalytic core and F(0) - containing the membrane proton channel, linked together by a central stalk and a peripheral stalk. During catalysis, ATP synthesis in the catalytic domain of F(1) is coupled via a rotary mechanism of the central stalk subunits to proton translocation. Part of the complex F(0) domain. Minor subunit located with subunit a in the membrane. The polypeptide is ATP synthase protein 8 (ATP8) (Candida glabrata (strain ATCC 2001 / BCRC 20586 / JCM 3761 / NBRC 0622 / NRRL Y-65 / CBS 138) (Yeast)).